A 104-amino-acid chain; its full sequence is Zinc finger C2H2 protein ECU02_0310 (104 aa).

The segment at 56–80 adopts a C2H2-type zinc-finger fold; it reads FYCCECDRHFITEKVLMEHKRSNPH.

This sequence belongs to the ZNF593/BUD20 C2H2-type zinc-finger protein family. As to quaternary structure, associates with pre-60S ribosomal particles; released from the pre-60S particle very early in the cytoplasm.

It is found in the nucleus. Its subcellular location is the cytoplasm. Functionally, involved in pre-60S ribosomal particles maturation by promoting the nuclear export of the 60S ribosome. In Encephalitozoon cuniculi (strain GB-M1) (Microsporidian parasite), this protein is Zinc finger C2H2 protein ECU02_0310.